The following is a 199-amino-acid chain: NAD(P)H dehydrogenase (quinone) (199 aa).

The Flavodoxin-like domain occupies 4-190 (VLVLYYSSWG…DGARFQGRHV (187 aa)). FMN is bound by residues 10 to 15 (SSWGHV) and 78 to 80 (TRY). Trp12 is an NAD(+) binding site. Residue Trp98 participates in substrate binding. FMN is bound by residues 113–119 (STASQHG) and His134.

The protein belongs to the WrbA family. Requires FMN as cofactor.

It carries out the reaction a quinone + NADH + H(+) = a quinol + NAD(+). It catalyses the reaction a quinone + NADPH + H(+) = a quinol + NADP(+). The polypeptide is NAD(P)H dehydrogenase (quinone) (Methylorubrum extorquens (strain CM4 / NCIMB 13688) (Methylobacterium extorquens)).